A 340-amino-acid polypeptide reads, in one-letter code: Heat-inducible transcription repressor HrcA (340 aa).

This sequence belongs to the HrcA family.

In terms of biological role, negative regulator of class I heat shock genes (grpE-dnaK-dnaJ and groELS operons). Prevents heat-shock induction of these operons. This chain is Heat-inducible transcription repressor HrcA, found in Burkholderia ambifaria (strain MC40-6).